Consider the following 333-residue polypeptide: MICKKASSKWIVLVCLIFILLTAVCASVVYGYTGTSWRQVYQAFTSFNGTNEHVIIKDVRLPRALVATVVGASLAAAGALMQALTKNPLASPGIFGINAGAGFFIVAGSFFLHIQSPQALVWSSFLGAAFTAAIVYAAGSLGREGLTPIKLTLAGAAMAAMFSSLTQGLLSVNELELAQVLFWLTGSVQGRSLDLLMTMFPYAAAALVICFFLGQKINLLVMGEDVAKGLGQKTGLLKFVMALCVVMLAGSAVAIAGPISFIGIIIPHFARFVVGNDYRWVLPFSAVLGAILLVCADIGARYIIMPQEVPVGVMTAIIGMPVFVYIARRGAKL.

An N-terminal signal peptide occupies residues 1–31 (MICKKASSKWIVLVCLIFILLTAVCASVVYG). Helical transmembrane passes span 64 to 84 (ALVA…MQAL), 94 to 114 (IFGI…FLHI), 119 to 139 (ALVW…YAAG), 152 to 172 (TLAG…LLSV), 193 to 213 (LDLL…CFFL), 246 to 266 (VMLA…GIII), 280 to 300 (WVLP…DIGA), and 303 to 323 (IIMP…MPVF).

Belongs to the binding-protein-dependent transport system permease family. FecCD subfamily. The complex is composed of one ATP-binding protein (YusV), two transmembrane proteins (YfiZ and YfhA) and a solute-binding protein (YfiY).

It localises to the cell membrane. Functionally, part of the ABC transporter complex YfiYZ/YfhA/YusV involved in import of the iron-hydroxamate siderophores schizokinen, arthrobactin and corprogen. In Bacillus subtilis (strain 168), this protein is Probable siderophore transport system permease protein YfiZ (yfiZ).